A 1084-amino-acid chain; its full sequence is TNF receptor-associated factor family protein DDB_G0272098 (1084 aa).

The region spanning 19-103 (YYCPDCGELL…KNRYYETKNF (85 aa)) is the LIM zinc-binding domain. 2 consecutive TRAF-type zinc fingers follow at residues 122–190 (KHIK…IDHE) and 191–248 (IHLS…YNMS). A coiled-coil region spans residues 265–321 (IEEQNQDIKELHNFIENHLSKKFIDLDTIVNIQKYLIKNKNQKISQLTEIIKRVDNS). Disordered stretches follow at residues 348-392 (YKNS…NINE), 490-523 (IRQQ…NTTI), 537-656 (NNNI…KDGL), and 709-897 (SIVE…NDDD). Composition is skewed to low complexity over residues 349-375 (KNSN…TNEN), 492-509 (QQQQ…QQQQ), 537-549 (NNNI…NNNK), and 556-570 (ITAA…TTST). Residues 489-553 (LIRQQQQQQQ…NNNNNKNNDD (65 aa)) adopt a coiled-coil conformation. The span at 571-586 (HTILNGTNNEASMTDI) shows a compositional bias: polar residues. The span at 587-637 (NETTSTTTTAETTEATASESTEESNNTAETTTTTTTTTTTITTAAETVNST) shows a compositional bias: low complexity. Residues 644-656 (TSEKVEEKGKDGL) are compositionally biased toward basic and acidic residues. A coiled-coil region spans residues 735 to 852 (NGNENENENE…NNNNNNNENV (118 aa)). Over residues 739 to 757 (NENENENENENENENENEN) the composition is skewed to acidic residues. Over residues 774 to 785 (SNINTSNDTEPT) the composition is skewed to polar residues. Positions 790 to 799 (EDIKKNKENE) are enriched in basic and acidic residues. Low complexity predominate over residues 809–849 (NNNIKSVEDTNNNNNNNNNNNNNNNNNNNNNNNNNNNNNNN). Basic and acidic residues-rich tracts occupy residues 853 to 864 (YDIKKDRNRENV) and 875 to 892 (ENGK…SEDK). The region spanning 909 to 1042 (IFRNQILFKD…DNCFIVNLEV (134 aa)) is the MATH domain. The disordered stretch occupies residues 1056-1084 (LLQKSSPPAATTTTTTSSSSSKTTPKTKR). Low complexity predominate over residues 1059–1084 (KSSPPAATTTTTTSSSSSKTTPKTKR).

Belongs to the TNF receptor-associated factor family.

The protein resides in the cytoplasm. Its function is as follows. Probable adapter protein and signal transducer that links members of the tumor necrosis factor receptor family to different signaling pathways by association with the receptor cytoplasmic domain and kinases. The polypeptide is TNF receptor-associated factor family protein DDB_G0272098 (Dictyostelium discoideum (Social amoeba)).